The sequence spans 288 residues: Transmembrane protein 163 (288 aa).

Residues 1–64 are disordered; it reads MEPALGSERR…ESGQFSDGLE (64 aa). The Cytoplasmic segment spans residues 1–87; that stretch reads MEPALGSERR…HEAQNYRKKA (87 aa). Residue serine 11 is modified to Phosphoserine. The segment covering 12 to 24 has biased composition (pro residues); that stretch reads PPGPGVPRPPPRG. The span at 25–42 shows a compositional bias: low complexity; the sequence is HAPSTAAPAPSPAPMSSS. Residues 41-71 are required for interaction with MCOLN1; that stretch reads SSVQSDEERQPRISESGQFSDGLEDRGLLES. Phosphoserine is present on residues serine 45, serine 54, serine 56, and serine 60. The helical transmembrane segment at 88–108 threads the bilayer; the sequence is LWVSWLSIIVTLALAVAAFTV. Residues 109–115 lie on the Extracellular side of the membrane; the sequence is SVMRYSA. The helical transmembrane segment at 116 to 136 threads the bilayer; sequence SAFGFAFDAILDVLSSAIVLW. Residues 137 to 149 are Cytoplasmic-facing; that stretch reads RYSNAAAVHSANR. A helical membrane pass occupies residues 150 to 170; it reads EYIACVILGVIFLLSSICIVV. The Extracellular portion of the chain corresponds to 171-186; it reads KAIHDLSTRLLPEVDD. The chain crosses the membrane as a helical span at residues 187 to 207; it reads FLFSVSILSGILCSVLAVLKF. The Cytoplasmic segment spans residues 208–216; the sequence is MLGKVLTSR. A helical membrane pass occupies residues 217–237; it reads ALITDGFNSLVGGVMGFSILL. Topologically, residues 238-254 are extracellular; the sequence is SAEVFKHNAAVWYLDGS. Residues 255–275 traverse the membrane as a helical segment; it reads IGVLIGLTIFAYGVKLLIDMV. At 276-288 the chain is on the cytoplasmic side; it reads PRVRQTRHYEMFE.

This sequence belongs to the TMEM163 family. Homodimer. Interacts with MCOLN1. Interacts with SLC30A1, SLC30A2, SLC30A3 and SLC30A4. In terms of tissue distribution, widely expressed, with high expression in the brain, cerebellum, heart, lung and spleen. In the brain, mainly expressed in the glutaminergic neuron subpopulations.

The protein resides in the cytoplasmic vesicle. Its subcellular location is the secretory vesicle. It is found in the synaptic vesicle membrane. It localises to the early endosome membrane. The protein localises to the late endosome membrane. The protein resides in the lysosome membrane. Its subcellular location is the cell membrane. It carries out the reaction Zn(2+)(in) = Zn(2+)(out). Zinc ion transporter that mediates zinc efflux and plays a crucial role in intracellular zinc homeostasis. Binds the divalent cations Zn(2+), Ni(2+), and to a minor extent Cu(2+). Is a functional modulator of P2X purinoceptors, including P2RX1, P2RX3, P2RX4 and P2RX7. Plays a role in central nervous system development and is required for myelination, and survival and proliferation of oligodendrocytes. This chain is Transmembrane protein 163 (Tmem163), found in Mus musculus (Mouse).